Reading from the N-terminus, the 256-residue chain is Protein FixA (256 aa).

The protein belongs to the ETF beta-subunit/FixA family. Heterodimer of FixA and FixB.

It functions in the pathway amine and polyamine metabolism; carnitine metabolism. Functionally, required for anaerobic carnitine reduction. May bring reductant to CaiA. The chain is Protein FixA from Escherichia coli O17:K52:H18 (strain UMN026 / ExPEC).